Reading from the N-terminus, the 517-residue chain is Acetylcholine receptor subunit delta (517 aa).

A signal peptide spans 1 to 21 (MAGPVPTLGLLAALVVCGSWG). At 22 to 245 (LNEEQRLIQH…VTFYLIIRRK (224 aa)) the chain is on the extracellular side. N-linked (GlcNAc...) asparagine glycosylation is found at Asn97, Asn164, and Asn190. The cysteines at positions 151 and 165 are disulfide-linked. 3 consecutive transmembrane segments (helical) span residues 246-270 (PLFY…VFYL), 278-296 (TSVA…LLIS), and 312-333 (FLLF…VLNI). Over 334–471 (HFRTPSTHVL…WNQVARTVDR (138 aa)) the chain is Cytoplasmic. Tyr390 is modified (phosphotyrosine; by Tyr-kinases). A helical transmembrane segment spans residues 472–490 (LCLFVVTPVMVVGTAWIFL).

This sequence belongs to the ligand-gated ion channel (TC 1.A.9) family. Acetylcholine receptor (TC 1.A.9.1) subfamily. Delta/CHRND sub-subfamily. Pentamer of two alpha chains, and one each of the beta, delta, and gamma (in immature muscle) or epsilon (in mature muscle) chains. The muscle heteropentamer composed of alpha-1, beta-1, delta, epsilon subunits interacts with the alpha-conotoxin ImII.

The protein resides in the postsynaptic cell membrane. It is found in the cell membrane. The catalysed reaction is K(+)(in) = K(+)(out). It catalyses the reaction Na(+)(in) = Na(+)(out). In terms of biological role, after binding acetylcholine, the AChR responds by an extensive change in conformation that affects all subunits and leads to opening of an ion-conducting channel across the plasma membrane. The chain is Acetylcholine receptor subunit delta (Chrnd) from Rattus norvegicus (Rat).